We begin with the raw amino-acid sequence, 307 residues long: Type 2A encapsulin shell protein (307 aa).

This sequence belongs to the encapsulin family. Family 2A subfamily. Homooligomeric. The encapsulin nanocompartment is formed by 60 subunits; monomers form pentamers which assemble to form shells. There are 12 charged pores where the pentamers meet as well as 3-fold axis channels and dimer channels.

The protein resides in the encapsulin nanocompartment. Its function is as follows. Shell component of a type 2A encapsulin nanocompartment. Forms encapsulin nanocompartments about 24 nm in diameter from 60 monomers. Probably encapsulates at least cysteine desulfurase (CyD) and allows passage of cysteine into its interior, probably involved in sulfur metabolism. This Mycobacterium avium protein is Type 2A encapsulin shell protein.